Consider the following 550-residue polypeptide: Glucagon-like peptide 2 receptor (550 aa).

At 1–173 (MRPQPSPAVP…SFRQNVDHYA (173 aa)) the chain is on the extracellular side. 3 disulfide bridges follow: Cys83–Cys105, Cys96–Cys137, and Cys118–Cys159. Asn97, Asn113, Asn148, and Asn162 each carry an N-linked (GlcNAc...) asparagine glycan. Residues 174–198 (LLYTLQLMYTVGYSVSLISLFLALT) traverse the membrane as a helical segment. At 199-210 (LFLFLRKLHCTR) the chain is on the cytoplasmic side. The helical transmembrane segment at 211-235 (NYIHMNLFASFILKVLAVLVKDMVS) threads the bilayer. The Extracellular portion of the chain corresponds to 236 to 261 (HNSYSKRPDDESGWMSYLSETSVSCR). The helical transmembrane segment at 262–285 (SVQVLLHYFVGTNHLWLLVEGLYL) threads the bilayer. Residues 286 to 299 (HTLLEPTVFPERRL) are Cytoplasmic-facing. The helical transmembrane segment at 300–321 (WPKYLVVGWAFPMLFVIPWGFA) threads the bilayer. Residues 322 to 339 (RAHLENTRCWATNGNLKI) lie on the Extracellular side of the membrane. Residues 340–362 (WWIIRGPMLLCVTVNFFIFLKIL) traverse the membrane as a helical segment. Residues 363 to 386 (KLLISKLKAHQMCFRDYKYRLAKS) are Cytoplasmic-facing. A helical membrane pass occupies residues 387 to 405 (TLLLIPLLGVHEVLFTFFP). Residues 406 to 417 (DDQVQGFSKRIR) are Extracellular-facing. Residues 418 to 438 (LFIQLTLSSVHGFLVALQYGF) form a helical membrane-spanning segment. Topologically, residues 439–550 (ANGEVKAELR…MEEILEESEI (112 aa)) are cytoplasmic.

The protein belongs to the G-protein coupled receptor 2 family.

It is found in the cell membrane. In terms of biological role, this is a receptor for glucagon-like peptide 2. The activity of this receptor is mediated by G proteins which activate adenylyl cyclase. This chain is Glucagon-like peptide 2 receptor (Glp2r), found in Rattus norvegicus (Rat).